The primary structure comprises 444 residues: tRNA modification GTPase MnmE (444 aa).

(6S)-5-formyl-5,6,7,8-tetrahydrofolate contacts are provided by arginine 28, glutamate 86, and arginine 126. The 145-residue stretch at 224–368 (GFCVVLAGAP…LLDAIQGSAA (145 aa)) folds into the TrmE-type G domain. Asparagine 234 is a K(+) binding site. GTP is bound by residues 234–239 (NAGKST), 253–259 (SDIPGTT), and 278–281 (DTAG). Serine 238 serves as a coordination point for Mg(2+). 3 residues coordinate K(+): serine 253, isoleucine 255, and threonine 258. Threonine 259 is a Mg(2+) binding site. Lysine 444 is a binding site for (6S)-5-formyl-5,6,7,8-tetrahydrofolate.

Belongs to the TRAFAC class TrmE-Era-EngA-EngB-Septin-like GTPase superfamily. TrmE GTPase family. As to quaternary structure, homodimer. Heterotetramer of two MnmE and two MnmG subunits. It depends on K(+) as a cofactor.

Its subcellular location is the cytoplasm. Functionally, exhibits a very high intrinsic GTPase hydrolysis rate. Involved in the addition of a carboxymethylaminomethyl (cmnm) group at the wobble position (U34) of certain tRNAs, forming tRNA-cmnm(5)s(2)U34. The chain is tRNA modification GTPase MnmE from Methylorubrum populi (strain ATCC BAA-705 / NCIMB 13946 / BJ001) (Methylobacterium populi).